The chain runs to 505 residues: MGETLGDPPVDPEHGAFADALPMSTSQEITMVDTEMPFWPTNFGISSVDLSVMDDHSHSFDIKPFTTVDFSSISAPHYEDIPFTRADPMVADYKYDLKLQEYQSAIKVEPASPPYYSEKTQLYNRPHEEPSNSLMAIECRVCGDKASGFHYGVHACEGCKGFFRRTIRLKLIYDRCDLNCRIHKKSRNKCQYCRFQKCLAVGMSHNAIRFGRMPQAEKEKLLAEISSDIDQLNPESADLRALAKHLYDSYIKSFPLTKAKARAILTGKTTDKSPFVIYDMNSLMMGEDKIKFKHITPLQEQSKEVAIRIFQGCQFRSVEAVQEITEYAKNIPGFINLDLNDQVTLLKYGVHEIIYTMLASLMNKDGVLISEGQGFMTREFLKSLRKPFGDFMEPKFEFAVKFNALELDDSDLAIFIAVIILSGDRPGLLNVKPIEDIQDNLLQALELQLKLNHPESSQLFAKVLQKMTDLRQIVTEHVQLLHVIKKTETDMSLHPLLQEIYKDLY.

The O-linked (GlcNAc) threonine glycan is linked to T84. S112 carries the post-translational modification Phosphoserine; by MAPK. Positions 136 to 210 form a DNA-binding region, nuclear receptor; sequence AIECRVCGDK…VGMSHNAIRF (75 aa). 2 NR C4-type zinc fingers span residues 139 to 159 and 176 to 198; these read CRVCGDKASGFHYGVHACEGC and CDLNCRIHKKSRNKCQYCRFQKC. The interval 205–280 is interaction with FAM120B; the sequence is HNAIRFGRMP…DKSPFVIYDM (76 aa). Positions 238-503 constitute an NR LBD domain; sequence DLRALAKHLY…HPLLQEIYKD (266 aa). Residue K252 forms a Glycyl lysine isopeptide (Lys-Gly) (interchain with G-Cter in ubiquitin) linkage. The 9aaTAD signature appears at 495–503; sequence PLLQEIYKD.

It belongs to the nuclear hormone receptor family. NR1 subfamily. Interacts with FOXO1 (acetylated form). Heterodimer with other nuclear receptors, such as RXRA. The heterodimer with the retinoic acid receptor RXRA is called adipocyte-specific transcription factor ARF6. Interacts with NCOA6 coactivator, leading to a strong increase in transcription of target genes. Interacts with coactivator PPARBP, leading to a mild increase in transcription of target genes. Interacts with NOCA7 in a ligand-inducible manner. Interacts with NCOA1 and NCOA2 LXXLL motifs. Interacts with ASXL1, ASXL2, DNTTIP2, FAM120B, MAP2K1/MEK1, NR0B2, PDPK1, PRDM16, PRMT2 and TGFB1I1. Interacts (when activated by agonist) with PPP5C. Interacts with HELZ2 and THRAP3; the interaction stimulates the transcriptional activity of PPARG. Interacts with PER2, the interaction is ligand dependent and blocks PPARG recruitment to target promoters. Interacts with NOCT. Interacts with ACTN4. Interacts (when in the liganded conformation) with GPS2. Interacts with CRY1 and CRY2 in a ligand-dependent manner. In the absence of hormonal ligand, interacts with TACC1. In macrophages, interacts with PAQR3 and STUB1; the interactions promote PPARG poylubiquitination and STUB1-mediated degradation. Post-translationally, phosphorylated by MAPK. The phosphorylation inhibits PPAR gamma activity. In terms of processing, O-GlcNAcylation at Thr-84 reduces transcriptional activity in adipocytes. Phosphorylated at basal conditions and dephosphorylated when treated with the ligand. May be dephosphorylated by PPP5C. The phosphorylated form may be inactive and dephosphorylation at induces adipogenic activity. Post-translationally, ubiquitinated by E3 ubiquitin-protein ligase complex containing FBXO9; leading to proteasomal degradation. Ubiquitinated at Lys-252 by TRIM55 leading to proteasomal degradation. Ubiquitinated by E3 ubiquitin-protein ligase STUB1/CHIP; leading to proteasomal degradation. As to expression, highest expression in adipose tissue.

It is found in the nucleus. The protein resides in the cytoplasm. With respect to regulation, PDPK1 activates its transcriptional activity independently of its kinase activity. Its function is as follows. Nuclear receptor that binds peroxisome proliferators such as hypolipidemic drugs and fatty acids. Once activated by a ligand, the nuclear receptor binds to DNA specific PPAR response elements (PPRE) and modulates the transcription of its target genes, such as acyl-CoA oxidase. It therefore controls the peroxisomal beta-oxidation pathway of fatty acids. Key regulator of adipocyte differentiation and glucose homeostasis. ARF6 acts as a key regulator of the tissue-specific adipocyte P2 (aP2) enhancer. Acts as a critical regulator of gut homeostasis by suppressing NF-kappa-B-mediated pro-inflammatory responses. Plays a role in the regulation of cardiovascular circadian rhythms by regulating the transcription of BMAL1 in the blood vessels. The sequence is that of Peroxisome proliferator-activated receptor gamma (Pparg) from Rattus norvegicus (Rat).